We begin with the raw amino-acid sequence, 603 residues long: NAD 5'-nucleotidase (603 aa).

The N-terminal stretch at 1 to 25 (MLLSKKSASFALSAFAMLFTSVALA) is a signal peptide. Zn(2+) is bound by residues Asp44, His46, Asp94, Asn126, and His227. Residues Arg397, Arg437, Phe456, and 540-546 (YVAGGKD) each bind substrate.

Belongs to the 5'-nucleotidase family. Requires Zn(2+) as cofactor.

It localises to the periplasm. The enzyme catalyses a ribonucleoside 5'-phosphate + H2O = a ribonucleoside + phosphate. Degrades NAD into adenosine and nicotinamide riboside, the latter being subsequently internalized by a specific permease. Also endowed with NAD(P) pyrophosphatase activity. Exhibits a broad substrate specificity, recognizing either mono- or dinucleotide nicotinamides and different adenosine phosphates with a maximal activity on 5'-adenosine monophosphate. The polypeptide is NAD 5'-nucleotidase (Haemophilus influenzae (strain ATCC 51907 / DSM 11121 / KW20 / Rd)).